The primary structure comprises 449 residues: Clusterin (449 aa).

The signal sequence occupies residues 1–22 (MMKTLLLFVGLLLTWESGQVLG). The Nuclear localization signal signature appears at 78-81 (KKKK). N-linked (GlcNAc...) (complex) asparagine glycosylation is present at asparagine 86. Intrachain disulfides connect cysteine 102/cysteine 313, cysteine 113/cysteine 305, cysteine 116/cysteine 302, cysteine 121/cysteine 295, and cysteine 129/cysteine 285. Asparagine 103 carries an N-linked (GlcNAc...) asparagine glycan. Phosphoserine is present on serine 133. 3 N-linked (GlcNAc...) asparagine glycosylation sites follow: asparagine 145, asparagine 291, and asparagine 354. Asparagine 374 carries an N-linked (GlcNAc...) (complex) asparagine glycan. Serine 396 is modified (phosphoserine). The Nuclear localization signal motif lies at 443 to 447 (RKKHR).

Belongs to the clusterin family. Antiparallel disulfide-linked heterodimer of an alpha chain and a beta chain. Self-associates and forms higher oligomers. Interacts with a broad range of misfolded proteins, including APP, APOC2 and LYZ. Slightly acidic pH promotes interaction with misfolded proteins. Forms high-molecular weight oligomers upon interaction with misfolded proteins. Interacts with APOA1, LRP2, CLUAP1 and PON1. Interacts with the complement membrane attack complex. Interacts (via alpha chain) with XRCC6. Interacts with SYVN1, COMMD1, BTRC, CUL1 and with ubiquitin and SCF (SKP1-CUL1-F-box protein) E3 ubiquitin-protein ligase complexes. Interacts (via alpha chain) with BAX in stressed cells, where BAX undergoes a conformation change leading to association with the mitochondrial membrane. Does not interact with BAX in unstressed cells. Found in a complex with LTF, CLU, EPPIN and SEMG1. Interacts (immaturely glycosylated pre-secreted form) with HSPA5; this interaction promotes CLU stability and facilitates stress-induced CLU retrotranslocation from the secretory pathway to the mitochondria, thereby reducing stress-induced apoptosis by stabilizing mitochondrial membrane integrity. Interacts (isoform 4) with BCL2L1; this interaction releases and activates BAX and promotes cell death. Interacts with TGFBR2 and ACVR1. Interacts (secreted form) with STMN3; this interaction may act as an important modulator during neuronal differentiation. Interacts with VLDLR and LRP8. Proteolytically cleaved on its way through the secretory system, probably within the Golgi lumen. Proteolytic cleavage is not necessary for its chaperone activity. All non-secreted forms are not proteolytically cleaved. Chaperone activity of uncleaved forms is dependent on a non-reducing environment. In terms of processing, polyubiquitinated, leading to proteasomal degradation. Under cellular stress, the intracellular level of cleaved form is reduced due to proteasomal degradation. Post-translationally, extensively glycosylated with sulfated N-linked carbohydrates. About 30% of the protein mass is comprised of complex N-linked carbohydrate. Endoplasmic reticulum (ER) stress induces changes in glycosylation status and increases level of hypoglycosylated forms. Core carbohydrates are essential for chaperone activity. Non-secreted forms are hypoglycosylated or unglycosylated. As to expression, detected in blood plasma, cerebrospinal fluid, milk, seminal plasma and colon mucosa. Detected in the germinal center of colon lymphoid nodules and in colon parasympathetic ganglia of the Auerbach plexus (at protein level). Ubiquitous. Detected in brain, testis, ovary, liver and pancreas, and at lower levels in kidney, heart, spleen and lung.

It is found in the secreted. It localises to the cytoplasm. Its subcellular location is the nucleus. The protein resides in the mitochondrion membrane. The protein localises to the cytosol. It is found in the microsome. It localises to the endoplasmic reticulum. Its subcellular location is the mitochondrion. The protein resides in the perinuclear region. The protein localises to the cytoplasmic vesicle. It is found in the secretory vesicle. It localises to the chromaffin granule. In terms of biological role, functions as extracellular chaperone that prevents aggregation of non native proteins. Prevents stress-induced aggregation of blood plasma proteins. Inhibits formation of amyloid fibrils by APP, APOC2, B2M, CALCA, CSN3, SNCA and aggregation-prone LYZ variants (in vitro). Does not require ATP. Maintains partially unfolded proteins in a state appropriate for subsequent refolding by other chaperones, such as HSPA8/HSC70. Does not refold proteins by itself. Binding to cell surface receptors triggers internalization of the chaperone-client complex and subsequent lysosomal or proteasomal degradation. Protects cells against apoptosis and against cytolysis by complement: inhibits assembly of the complement membrane attack complex (MAC) by preventing polymerization of C9 pore component of the MAC complex. Intracellular forms interact with ubiquitin and SCF (SKP1-CUL1-F-box protein) E3 ubiquitin-protein ligase complexes and promote the ubiquitination and subsequent proteasomal degradation of target proteins. Promotes proteasomal degradation of COMMD1 and IKBKB. Modulates NF-kappa-B transcriptional activity. A mitochondrial form suppresses BAX-dependent release of cytochrome c into the cytoplasm and inhibit apoptosis. Plays a role in the regulation of cell proliferation. An intracellular form suppresses stress-induced apoptosis by stabilizing mitochondrial membrane integrity through interaction with HSPA5. Secreted form does not affect caspase or BAX-mediated intrinsic apoptosis and TNF-induced NF-kappa-B-activity. Secreted form act as an important modulator during neuronal differentiation through interaction with STMN3. Plays a role in the clearance of immune complexes that arise during cell injury. Its function is as follows. Does not affect caspase or BAX-mediated intrinsic apoptosis and TNF-induced NF-kappa-B-activity. Does not affect caspase or BAX-mediated intrinsic apoptosis and TNF-induced NF-kappa-B-activity. Promotes cell death through interaction with BCL2L1 that releases and activates BAX. The sequence is that of Clusterin from Homo sapiens (Human).